The primary structure comprises 339 residues: Large ribosomal subunit protein uL10 (339 aa).

A disordered region spans residues 307–339; sequence VEEEKKEEKVEEEKEDEEASEEEALAGLSALFG. Over residues 308 to 318 the composition is skewed to basic and acidic residues; the sequence is EEEKKEEKVEE. Residues 319 to 330 are compositionally biased toward acidic residues; it reads EKEDEEASEEEA.

This sequence belongs to the universal ribosomal protein uL10 family. As to quaternary structure, part of the 50S ribosomal subunit. Forms part of the ribosomal stalk which helps the ribosome interact with GTP-bound translation factors. Forms a heptameric L10(L12)2(L12)2(L12)2 complex, where L10 forms an elongated spine to which the L12 dimers bind in a sequential fashion.

In terms of biological role, forms part of the ribosomal stalk, playing a central role in the interaction of the ribosome with GTP-bound translation factors. The sequence is that of Large ribosomal subunit protein uL10 from Pyrococcus furiosus (strain ATCC 43587 / DSM 3638 / JCM 8422 / Vc1).